The chain runs to 94 residues: Large ribosomal subunit protein bL25 (94 aa).

It belongs to the bacterial ribosomal protein bL25 family. In terms of assembly, part of the 50S ribosomal subunit; part of the 5S rRNA/L5/L18/L25 subcomplex. Contacts the 5S rRNA. Binds to the 5S rRNA independently of L5 and L18.

Functionally, this is one of the proteins that binds to the 5S RNA in the ribosome where it forms part of the central protuberance. In Klebsiella pneumoniae subsp. pneumoniae (strain ATCC 700721 / MGH 78578), this protein is Large ribosomal subunit protein bL25.